Here is a 202-residue protein sequence, read N- to C-terminus: GTP cyclohydrolase-2 (202 aa).

49 to 53 (RIHSE) is a binding site for GTP. Residues Cys54, Cys65, and Cys67 each contribute to the Zn(2+) site. GTP is bound by residues Gln70, 92–94 (EGR), and Thr114. Asp126 acts as the Proton acceptor in catalysis. Residue Arg128 is the Nucleophile of the active site. GTP contacts are provided by Thr149 and Lys154.

The protein belongs to the GTP cyclohydrolase II family. Requires Zn(2+) as cofactor.

The enzyme catalyses GTP + 4 H2O = 2,5-diamino-6-hydroxy-4-(5-phosphoribosylamino)-pyrimidine + formate + 2 phosphate + 3 H(+). Its pathway is cofactor biosynthesis; riboflavin biosynthesis; 5-amino-6-(D-ribitylamino)uracil from GTP: step 1/4. Catalyzes the conversion of GTP to 2,5-diamino-6-ribosylamino-4(3H)-pyrimidinone 5'-phosphate (DARP), formate and pyrophosphate. In Shewanella frigidimarina (strain NCIMB 400), this protein is GTP cyclohydrolase-2.